The following is a 142-amino-acid chain: Small ribosomal subunit protein bS6 (142 aa).

Residues 110 to 142 form a disordered region; the sequence is NKKPSHAKEKHEKTEHAHSHHAEEAKSTESHSE.

The protein belongs to the bacterial ribosomal protein bS6 family.

Its function is as follows. Binds together with bS18 to 16S ribosomal RNA. In Helicobacter pylori (strain G27), this protein is Small ribosomal subunit protein bS6.